The primary structure comprises 97 residues: MTAKGQMLQDPFLNALRKEHVPVSIYLVNGIKLQGQVESFDQYVVLLRNTSVTQMVYKHAISTIVPARSVNLQHENRPQAAPASTLVQVETVQQPAE.

The region spanning 10 to 70 is the Sm domain; it reads DPFLNALRKE…ISTIVPARSV (61 aa). A disordered region spans residues 75–97; the sequence is ENRPQAAPASTLVQVETVQQPAE. A compositionally biased stretch (polar residues) spans 85–97; it reads TLVQVETVQQPAE.

The protein belongs to the Hfq family. Homohexamer.

In terms of biological role, RNA chaperone that binds small regulatory RNA (sRNAs) and mRNAs to facilitate mRNA translational regulation in response to envelope stress, environmental stress and changes in metabolite concentrations. Also binds with high specificity to tRNAs. The sequence is that of RNA-binding protein Hfq from Neisseria meningitidis serogroup C / serotype 2a (strain ATCC 700532 / DSM 15464 / FAM18).